The primary structure comprises 230 residues: Ubiquitin carboxyl-terminal hydrolase isozyme L3 (230 aa).

One can recognise a UCH catalytic domain in the interval 5 to 229 (RWLPLEANPE…LRFNAIALSA (225 aa)). The interaction with ubiquitin stretch occupies residues 8–13 (PLEANP). Cys-95 acts as the Nucleophile in catalysis. A Phosphoserine modification is found at Ser-130. Positions 152–159 (AHEGQTEA) are interaction with ubiquitin. Crossover loop which restricts access of large ubiquitin adducts to the active site. His-169 acts as the Proton donor in catalysis. The interaction with ubiquitin stretch occupies residues 219-224 (ELRFNA).

This sequence belongs to the peptidase C12 family. As to quaternary structure, preferentially binds diubiquitin; the interaction does not hydrolyze diubiquitin but, in vitro, inhibits the hydrolyzing activity on other substrates. As to expression, highly expressed in heart, skeletal muscle, and testis.

The protein localises to the cytoplasm. It carries out the reaction Thiol-dependent hydrolysis of ester, thioester, amide, peptide and isopeptide bonds formed by the C-terminal Gly of ubiquitin (a 76-residue protein attached to proteins as an intracellular targeting signal).. With respect to regulation, inhibited by monoubiquitin and diubiquitin. Functionally, deubiquitinating enzyme (DUB) that controls levels of cellular ubiquitin through processing of ubiquitin precursors and ubiquitinated proteins. Thiol protease that recognizes and hydrolyzes a peptide bond at the C-terminal glycine of either ubiquitin or NEDD8. Has a 10-fold preference for Arg and Lys at position P3'', and exhibits a preference towards 'Lys-48'-linked ubiquitin chains. Deubiquitinates ENAC in apical compartments, thereby regulating apical membrane recycling. Indirectly increases the phosphorylation of IGFIR, AKT and FOXO1 and promotes insulin-signaling and insulin-induced adipogenesis. Required for stress-response retinal, skeletal muscle and germ cell maintenance. May be involved in working memory. Can hydrolyze UBB(+1), a mutated form of ubiquitin which is not effectively degraded by the proteasome and is associated with neurogenerative disorders. This chain is Ubiquitin carboxyl-terminal hydrolase isozyme L3 (UCHL3), found in Homo sapiens (Human).